The sequence spans 370 residues: Probable trehalose-phosphate phosphatase J (370 aa).

The protein belongs to the trehalose phosphatase family. The cofactor is a divalent metal cation.

The catalysed reaction is alpha,alpha-trehalose 6-phosphate + H2O = alpha,alpha-trehalose + phosphate. It functions in the pathway glycan biosynthesis; trehalose biosynthesis. Its function is as follows. Removes the phosphate from trehalose 6-phosphate to produce free trehalose. Trehalose accumulation in plant may improve abiotic stress tolerance. This chain is Probable trehalose-phosphate phosphatase J (TPPJ), found in Arabidopsis thaliana (Mouse-ear cress).